Consider the following 115-residue polypeptide: T cell receptor beta variable 11-1 (115 aa).

The first 21 residues, 1-21, serve as a signal peptide directing secretion; that stretch reads MSTRLLCWMALCLLGAELSEA. Positions 22 to 115 constitute an Ig-like domain; it reads EVAQSPRYKI…SAMYLCASSL (94 aa). Cysteine 42 and cysteine 111 form a disulfide bridge.

Alpha-beta TR is a heterodimer composed of an alpha and beta chain; disulfide-linked. The alpha-beta TR is associated with the transmembrane signaling CD3 coreceptor proteins to form the TR-CD3 (TcR or TCR). The assembly of alpha-beta TR heterodimers with CD3 occurs in the endoplasmic reticulum where a single alpha-beta TR heterodimer associates with one CD3D-CD3E heterodimer, one CD3G-CD3E heterodimer and one CD247 homodimer forming a stable octameric structure. CD3D-CD3E and CD3G-CD3E heterodimers preferentially associate with TR alpha and TR beta chains, respectively. The association of the CD247 homodimer is the last step of TcR assembly in the endoplasmic reticulum and is required for transport to the cell surface.

The protein resides in the cell membrane. V region of the variable domain of T cell receptor (TR) beta chain that participates in the antigen recognition. Alpha-beta T cell receptors are antigen specific receptors which are essential to the immune response and are present on the cell surface of T lymphocytes. Recognize peptide-major histocompatibility (MH) (pMH) complexes that are displayed by antigen presenting cells (APC), a prerequisite for efficient T cell adaptive immunity against pathogens. Binding of alpha-beta TR to pMH complex initiates TR-CD3 clustering on the cell surface and intracellular activation of LCK that phosphorylates the ITAM motifs of CD3G, CD3D, CD3E and CD247 enabling the recruitment of ZAP70. In turn ZAP70 phosphorylates LAT, which recruits numerous signaling molecules to form the LAT signalosome. The LAT signalosome propagates signal branching to three major signaling pathways, the calcium, the mitogen-activated protein kinase (MAPK) kinase and the nuclear factor NF-kappa-B (NF-kB) pathways, leading to the mobilization of transcription factors that are critical for gene expression and essential for T cell growth and differentiation. The T cell repertoire is generated in the thymus, by V-(D)-J rearrangement. This repertoire is then shaped by intrathymic selection events to generate a peripheral T cell pool of self-MH restricted, non-autoaggressive T cells. Post-thymic interaction of alpha-beta TR with the pMH complexes shapes TR structural and functional avidity. This Homo sapiens (Human) protein is T cell receptor beta variable 11-1.